Here is a 256-residue protein sequence, read N- to C-terminus: Major prion protein (256 aa).

Positions methionine 1–cysteine 24 are cleaved as a signal peptide. The interaction with GRB2, ERI3 and SYN1 stretch occupies residues lysine 25 to alanine 233. The tract at residues proline 28–threonine 110 is disordered. 5 repeat units span residues proline 54–glutamine 62, proline 63–glutamine 70, proline 71–glutamine 78, proline 79–glutamine 86, and proline 87–glutamine 95. The interval proline 54–glutamine 95 is 5 X 8 AA tandem repeats of P-H-G-G-G-W-G-Q. Gly residues predominate over residues glutamine 55–glycine 97. Cu(2+)-binding residues include histidine 64, glycine 65, glycine 66, histidine 72, glycine 73, glycine 74, histidine 80, glycine 81, glycine 82, histidine 88, glycine 90, and glycine 91. Cysteine 182 and cysteine 217 form a disulfide bridge. 2 N-linked (GlcNAc...) asparagine glycosylation sites follow: asparagine 184 and asparagine 200. Alanine 233 carries GPI-anchor amidated alanine lipidation. The propeptide at serine 234–glycine 256 is removed in mature form.

The protein belongs to the prion family. Monomer and homodimer. Has a tendency to aggregate into amyloid fibrils containing a cross-beta spine, formed by a steric zipper of superposed beta-strands. Soluble oligomers may represent an intermediate stage on the path to fibril formation. Copper binding may promote oligomerization. Interacts with GRB2, APP, ERI3/PRNPIP and SYN1. Mislocalized cytosolically exposed PrP interacts with MGRN1; this interaction alters MGRN1 subcellular location and causes lysosomal enlargement. Interacts with KIAA1191.

The protein resides in the cell membrane. The protein localises to the golgi apparatus. Functionally, its primary physiological function is unclear. Has cytoprotective activity against internal or environmental stresses. May play a role in neuronal development and synaptic plasticity. May be required for neuronal myelin sheath maintenance. May play a role in iron uptake and iron homeostasis. Soluble oligomers are toxic to cultured neuroblastoma cells and induce apoptosis (in vitro). Association with GPC1 (via its heparan sulfate chains) targets PRNP to lipid rafts. Also provides Cu(2+) or Zn(2+) for the ascorbate-mediated GPC1 deaminase degradation of its heparan sulfate side chains. In Ovis canadensis (Bighorn sheep), this protein is Major prion protein (PRNP).